A 201-amino-acid chain; its full sequence is IDLSRF-like peptide (201 aa).

A signal peptide spans 1–28; sequence MVRRFCNGAVALGIALTACAAFPRAIMA. Positions 43–201 are excised as a propeptide; the sequence is SDACHPYEPF…EKLVKTGFLD (159 aa). One can recognise an LDL-receptor class A domain in the interval 45 to 85; the sequence is ACHPYEPFKCPGDGLCISIQYLCDGAPDCQDGYDEDSRLCT. Intrachain disulfides connect C46-C60, C54-C73, and C67-C84.

As to expression, expressed in central brain, antennal and optical lobes, in gnathal, thoracic and abdominal ganglia and in the retrocerebral complex (at protein level).

Its subcellular location is the secreted. In Camponotus floridanus (Florida carpenter ant), this protein is IDLSRF-like peptide.